We begin with the raw amino-acid sequence, 545 residues long: 4-coumarate--CoA ligase 1 (545 aa).

Positions 192, 193, 194, 195, 196, and 200 each coordinate ATP. (E)-4-coumaroyl-AMP is bound by residues Tyr242 and Ser246. Lys263 contacts CoA. The SBD1 stretch occupies residues 265-334 (DIAQFLELIP…AKFPNAKLGQ (70 aa)). (E)-4-coumaroyl-AMP is bound by residues Ala312, Gln334, Gly335, Thr339, and Met347. ATP contacts are provided by Gln334, Gly335, and Thr339. Residues 335–402 (GYGMTEAGPV…IRGDQIMKGY (68 aa)) form an SBD2 region. Positions 423 and 438 each coordinate ATP. Residues Lys440 and Lys444 each contribute to the (E)-4-coumaroyl-AMP site. CoA-binding residues include Lys446 and Gly447. Lys529 provides a ligand contact to ATP.

The protein belongs to the ATP-dependent AMP-binding enzyme family. Requires Mg(2+) as cofactor.

The enzyme catalyses (E)-4-coumarate + ATP + CoA = (E)-4-coumaroyl-CoA + AMP + diphosphate. It carries out the reaction (E)-4-coumarate + ATP + H(+) = (E)-4-coumaroyl-AMP + diphosphate. The catalysed reaction is (E)-4-coumaroyl-AMP + CoA = (E)-4-coumaroyl-CoA + AMP + H(+). Its pathway is phytoalexin biosynthesis; 3,4',5-trihydroxystilbene biosynthesis; 3,4',5-trihydroxystilbene from trans-4-coumarate: step 1/2. In terms of biological role, carboxylate--CoA ligase that may use 4-coumarate as substrate. Follows a two-step reaction mechanism, wherein the carboxylate substrate first undergoes adenylation by ATP, followed by a thioesterification in the presence of CoA to yield the final CoA thioester. This Solanum tuberosum (Potato) protein is 4-coumarate--CoA ligase 1 (4CL1).